The chain runs to 390 residues: L-rhamnonate dehydratase (390 aa).

The substrate site is built by H19 and R45. The Mg(2+) site is built by D211, E237, and E265. The active-site Proton acceptor is the H315. E335 is a binding site for substrate.

It belongs to the mandelate racemase/muconate lactonizing enzyme family. RhamD subfamily. Mg(2+) serves as cofactor.

It catalyses the reaction L-rhamnonate = 2-dehydro-3-deoxy-L-rhamnonate + H2O. Its function is as follows. Catalyzes the dehydration of L-rhamnonate to 2-keto-3-deoxy-L-rhamnonate (KDR). The polypeptide is L-rhamnonate dehydratase (Saccharopolyspora erythraea (strain ATCC 11635 / DSM 40517 / JCM 4748 / NBRC 13426 / NCIMB 8594 / NRRL 2338)).